Reading from the N-terminus, the 36-residue chain is MTTLNFPSVLVPLVGLVFPAIAMASLFLHVQKNKIV.

Residues 8-28 (SVLVPLVGLVFPAIAMASLFL) form a helical membrane-spanning segment.

This sequence belongs to the PsaI family.

Its subcellular location is the plastid. It localises to the chloroplast thylakoid membrane. In terms of biological role, may help in the organization of the PsaL subunit. This is Photosystem I reaction center subunit VIII from Helianthus annuus (Common sunflower).